Reading from the N-terminus, the 312-residue chain is DNA-directed RNA polymerase subunit alpha (312 aa).

The segment at 1–226 is alpha N-terminal domain (alpha-NTD); sequence MIEFEKPNIT…EHLNLFTNLT (226 aa). An alpha C-terminal domain (alpha-CTD) region spans residues 243–312; the sequence is DDRILERTIE…DLGLGLKNDK (70 aa).

Belongs to the RNA polymerase alpha chain family. Homodimer. The RNAP catalytic core consists of 2 alpha, 1 beta, 1 beta' and 1 omega subunit. When a sigma factor is associated with the core the holoenzyme is formed, which can initiate transcription.

The enzyme catalyses RNA(n) + a ribonucleoside 5'-triphosphate = RNA(n+1) + diphosphate. DNA-dependent RNA polymerase catalyzes the transcription of DNA into RNA using the four ribonucleoside triphosphates as substrates. This is DNA-directed RNA polymerase subunit alpha from Streptococcus sanguinis (strain SK36).